Reading from the N-terminus, the 241-residue chain is Carboxy-S-adenosyl-L-methionine synthase (241 aa).

S-adenosyl-L-methionine contacts are provided by residues Y38, 63-65 (GCS), 88-89 (DN), 116-117 (DI), N131, and R198.

The protein belongs to the class I-like SAM-binding methyltransferase superfamily. Cx-SAM synthase family. As to quaternary structure, homodimer.

The catalysed reaction is prephenate + S-adenosyl-L-methionine = carboxy-S-adenosyl-L-methionine + 3-phenylpyruvate + H2O. Its function is as follows. Catalyzes the conversion of S-adenosyl-L-methionine (SAM) to carboxy-S-adenosyl-L-methionine (Cx-SAM). This is Carboxy-S-adenosyl-L-methionine synthase from Haemophilus influenzae (strain 86-028NP).